The sequence spans 257 residues: Probable amino-acid ABC transporter-binding protein HI_1080 (257 aa).

Residues 1-23 form the signal peptide; that stretch reads MKKLLFTTALLTGAIAFSTFSHA.

The protein belongs to the bacterial solute-binding protein 3 family.

The protein localises to the periplasm. Functionally, probably part of a binding-protein-dependent transport system for an amino acid. The polypeptide is Probable amino-acid ABC transporter-binding protein HI_1080 (Haemophilus influenzae (strain ATCC 51907 / DSM 11121 / KW20 / Rd)).